Here is a 245-residue protein sequence, read N- to C-terminus: NADH-quinone oxidoreductase subunit C (245 aa).

Positions 1–10 are enriched in basic and acidic residues; sequence MNAPQDRTDD. Disordered regions lie at residues 1–54 and 217–245; these read MNAP…GYGG and QRKD…RSYQ. Residues 11–28 show a composition bias toward low complexity; it reads GGVPVPVTPAGATGGAPA. Gly residues predominate over residues 39–54; that stretch reads GMFGDQGTGDVSGYGG.

This sequence belongs to the complex I 30 kDa subunit family. In terms of assembly, NDH-1 is composed of 14 different subunits. Subunits NuoB, C, D, E, F, and G constitute the peripheral sector of the complex.

Its subcellular location is the cell membrane. The catalysed reaction is a quinone + NADH + 5 H(+)(in) = a quinol + NAD(+) + 4 H(+)(out). Functionally, NDH-1 shuttles electrons from NADH, via FMN and iron-sulfur (Fe-S) centers, to quinones in the respiratory chain. The immediate electron acceptor for the enzyme in this species is believed to be a menaquinone. Couples the redox reaction to proton translocation (for every two electrons transferred, four hydrogen ions are translocated across the cytoplasmic membrane), and thus conserves the redox energy in a proton gradient. This is NADH-quinone oxidoreductase subunit C from Salinispora arenicola (strain CNS-205).